The chain runs to 292 residues: Sulfhydrogenase 1 subunit gamma (292 aa).

The FAD-binding FR-type domain maps to 15–115 (YALHRVKVLK…RGPYGNGFPV (101 aa)). 4 residues coordinate [2Fe-2S] cluster: Cys-253, Cys-258, Cys-261, and Cys-273.

In terms of assembly, heterotetramer of alpha, beta, gamma and delta subunits. The nickel-containing alpha and delta subunits constitute the hydrogenase activity. The beta and gamma subunits (flavin-containing dimer) constitute the sulfur reductase activity. The cofactor is FAD. [2Fe-2S] cluster is required as a cofactor.

It is found in the cytoplasm. The catalysed reaction is n sulfur + H2 = (n-1) sulfur + hydrogen sulfide + H(+). Stimulated by rubredoxin at pH 7.6 but not ferredoxin. Functionally, part of a bifunctional enzyme complex that functions as an NADPH-dependent hydrogen-evolving hydrogenase with sulfur reducing activity. May play a role in hydrogen cycling during fermentative growth. Activity not exhibited with NAD. The beta and gamma subunits form the sulfur reducing component that catalyzes the cytoplasmic production of hydrogen sulfide in the presence of elemental sulfur. Not active in the presence of sodium sulfate, sodium sulfite, sodium thiosulfate or cysteine. This is Sulfhydrogenase 1 subunit gamma from Pyrococcus furiosus (strain ATCC 43587 / DSM 3638 / JCM 8422 / Vc1).